We begin with the raw amino-acid sequence, 146 residues long: Phospholipase A2, membrane associated (146 aa).

An N-terminal signal peptide occupies residues 1 to 21 (MKVLLLLAASIMAFGSIQVQG). 7 cysteine pairs are disulfide-bonded: Cys-47–Cys-139, Cys-49–Cys-65, Cys-64–Cys-119, Cys-70–Cys-146, Cys-71–Cys-112, Cys-80–Cys-105, and Cys-98–Cys-110. Ca(2+) contacts are provided by His-48, Gly-50, and Gly-52. The active site involves His-68. Position 69 (Asp-69) interacts with Ca(2+). Asp-113 is an active-site residue.

It belongs to the phospholipase A2 family. It depends on Ca(2+) as a cofactor. Mainly in the Paneth cells adjacent to the stem population in the small intestines.

It localises to the secreted. It is found in the cell membrane. The protein localises to the mitochondrion outer membrane. It catalyses the reaction a 1,2-diacyl-sn-glycero-3-phosphoethanolamine + H2O = a 1-acyl-sn-glycero-3-phosphoethanolamine + a fatty acid + H(+). It carries out the reaction 1-hexadecanoyl-2-(9Z-octadecenoyl)-sn-glycero-3-phosphoethanolamine + H2O = 1-hexadecanoyl-sn-glycero-3-phosphoethanolamine + (9Z)-octadecenoate + H(+). The enzyme catalyses 1-hexadecanoyl-2-(9Z,12Z-octadecadienoyl)-sn-glycero-3-phosphoethanolamine + H2O = 1-hexadecanoyl-sn-glycero-3-phosphoethanolamine + (9Z,12Z)-octadecadienoate + H(+). The catalysed reaction is 1-hexadecanoyl-2-(5Z,8Z,11Z,14Z-eicosatetraenoyl)-sn-glycero-3-phosphoethanolamine + H2O = 1-hexadecanoyl-sn-glycero-3-phosphoethanolamine + (5Z,8Z,11Z,14Z)-eicosatetraenoate + H(+). It catalyses the reaction N-hexadecanoyl-1,2-di-(9Z-octadecenoyl)-sn-glycero-3-phosphoethanolamine + H2O = N-hexadecanoyl-1-(9Z-octadecenoyl)-sn-glycero-3-phosphoethanolamine + (9Z)-octadecenoate + H(+). It carries out the reaction 1,2-dihexadecanoyl-sn-glycero-3-phospho-(1'-sn-glycerol) + H2O = 1-hexadecanoyl-sn-glycero-3-phospho-(1'-sn-glycerol) + hexadecanoate + H(+). The enzyme catalyses 1-hexadecanoyl-2-(9Z-octadecenoyl)-sn-glycero-3-phosphoglycerol + H2O = 1-hexadecanoyl-sn-glycero-3-phosphoglycerol + (9Z)-octadecenoate + H(+). The catalysed reaction is 1-hexadecanoyl-2-(9Z-octadecenoyl)-sn-glycero-3-phospho-(1'-sn-glycerol) + H2O = 1-hexadecanoyl-sn-glycero-3-phospho-(1'-sn-glycerol) + (9Z)-octadecenoate + H(+). It catalyses the reaction a 1,2-diacyl-sn-glycero-3-phosphocholine + H2O = a 1-acyl-sn-glycero-3-phosphocholine + a fatty acid + H(+). It carries out the reaction 1,2-dihexadecanoyl-sn-glycero-3-phosphocholine + H2O = 1-hexadecanoyl-sn-glycero-3-phosphocholine + hexadecanoate + H(+). The enzyme catalyses 1-hexadecanoyl-2-(9Z-octadecenoyl)-sn-glycero-3-phosphocholine + H2O = 1-hexadecanoyl-sn-glycero-3-phosphocholine + (9Z)-octadecenoate + H(+). The catalysed reaction is 1-hexadecanoyl-2-(9Z,12Z-octadecadienoyl)-sn-glycero-3-phosphocholine + H2O = (9Z,12Z)-octadecadienoate + 1-hexadecanoyl-sn-glycero-3-phosphocholine + H(+). It catalyses the reaction 1-hexadecanoyl-2-(4Z,7Z,10Z,13Z,16Z,19Z-docosahexaenoyl)-sn-glycero-3-phosphocholine + H2O = (4Z,7Z,10Z,13Z,16Z,19Z)-docosahexaenoate + 1-hexadecanoyl-sn-glycero-3-phosphocholine + H(+). In terms of biological role, secretory calcium-dependent phospholipase A2 that primarily targets extracellular phospholipids with implications in host antimicrobial defense, inflammatory response and tissue regeneration. Hydrolyzes the ester bond of the fatty acyl group attached at sn-2 position of phospholipids (phospholipase A2 activity) with preference for phosphatidylethanolamines and phosphatidylglycerols over phosphatidylcholines. Contributes to lipid remodeling of cellular membranes and generation of lipid mediators involved in pathogen clearance. Displays bactericidal activity against Gram-positive bacteria by directly hydrolyzing phospholipids of the bacterial membrane. Upon sterile inflammation, targets membrane phospholipids of extracellular mitochondria released from activated platelets, generating free unsaturated fatty acids such as arachidonate that is used by neighboring leukocytes to synthesize inflammatory eicosanoids such as leukotrienes. Simultaneously, by compromising mitochondrial membrane integrity, promotes the release in circulation of potent damage-associated molecular pattern molecules that activate the innate immune response. Plays a stem cell regulator role in the intestinal crypt. Within intracellular compartment mediates Paneth cell differentiation and its stem cell supporting functions by inhibiting Wnt signaling pathway in intestinal stem cell (ICS). Secreted in the intestinal lumen upon inflammation, acts in an autocrine way and promotes prostaglandin E2 synthesis that stimulates Wnt signaling pathway in ICS cells and tissue regeneration. May play a role in the biosynthesis of N-acyl ethanolamines that regulate energy metabolism and inflammation. Hydrolyzes N-acyl phosphatidylethanolamines to N-acyl lysophosphatidylethanolamines, which are further cleaved by a lysophospholipase D to release N-acyl ethanolamines. Independent of its catalytic activity, acts as a ligand for integrins. Binds to and activates integrins ITGAV:ITGB3, ITGA4:ITGB1 and ITGA5:ITGB1. Binds to a site (site 2) which is distinct from the classical ligand-binding site (site 1) and induces integrin conformational changes and enhanced ligand binding to site 1. Induces cell proliferation in an integrin-dependent manner. The polypeptide is Phospholipase A2, membrane associated (Pla2g2a) (Mus musculus (Mouse)).